Here is a 249-residue protein sequence, read N- to C-terminus: Aquaporin TIP4-1 (249 aa).

Met1 carries the post-translational modification N-acetylmethionine. The Cytoplasmic portion of the chain corresponds to 1 to 20; sequence MKKIELGHHSEAAKPDCIKA. Lys3 is subject to N6,N6-dimethyllysine. Residues 21-41 traverse the membrane as a helical segment; the sequence is LIVEFITTFLFVFAGVGSAMA. The Vacuolar segment spans residues 42 to 49; that stretch reads TDSLVGNT. Residues 50–70 form a helical membrane-spanning segment; it reads LVGLFAVAVAHAFVVAVMISA. The Cytoplasmic segment spans residues 71–105; sequence GHISGGHLNPAVTLGLLLGGHISVFRAFLYWIDQL. The NPA 1 signature appears at 79–81; it reads NPA. Residues 106–126 traverse the membrane as a helical segment; that stretch reads LASSAACFLLSYLTGGMGTPV. The Vacuolar portion of the chain corresponds to 127–137; that stretch reads HTLASGVSYTQ. A helical membrane pass occupies residues 138-158; it reads GIIWEIILTFSLLFTVYATIV. Topologically, residues 159 to 166 are cytoplasmic; the sequence is DPKKGSLD. The chain crosses the membrane as a helical span at residues 167–187; sequence GFGPLLTGFVVGANILAGGAF. Residues 188–212 are Vacuolar-facing; sequence SGASMNPARSFGPALVSGNWTDHWV. The short motif at 193-195 is the NPA 2 element; it reads NPA. A helical membrane pass occupies residues 213-233; that stretch reads YWVGPLIGGGLAGFIYENVLI. Residues 234–249 are Cytoplasmic-facing; that stretch reads DRPHVPVADDEQPLLN.

This sequence belongs to the MIP/aquaporin (TC 1.A.8) family. TIP (TC 1.A.8.10) subfamily. As to expression, expressed in roots.

It is found in the vacuole membrane. Aquaporins facilitate the transport of water and small neutral solutes across cell membranes. Transports urea in yeast cells in a pH-independent manner. The chain is Aquaporin TIP4-1 (TIP4-1) from Arabidopsis thaliana (Mouse-ear cress).